A 242-amino-acid chain; its full sequence is Pyridoxine 5'-phosphate synthase (242 aa).

Asn6 contributes to the 3-amino-2-oxopropyl phosphate binding site. 8–9 is a binding site for 1-deoxy-D-xylulose 5-phosphate; that stretch reads DH. Arg17 provides a ligand contact to 3-amino-2-oxopropyl phosphate. His42 acts as the Proton acceptor in catalysis. 1-deoxy-D-xylulose 5-phosphate is bound by residues Arg44 and His49. Glu69 (proton acceptor) is an active-site residue. 1-deoxy-D-xylulose 5-phosphate is bound at residue Thr99. The Proton donor role is filled by His190. 3-amino-2-oxopropyl phosphate contacts are provided by residues Gly191 and 212–213; that span reads GH.

It belongs to the PNP synthase family. In terms of assembly, homooctamer; tetramer of dimers.

The protein resides in the cytoplasm. It carries out the reaction 3-amino-2-oxopropyl phosphate + 1-deoxy-D-xylulose 5-phosphate = pyridoxine 5'-phosphate + phosphate + 2 H2O + H(+). Its pathway is cofactor biosynthesis; pyridoxine 5'-phosphate biosynthesis; pyridoxine 5'-phosphate from D-erythrose 4-phosphate: step 5/5. In terms of biological role, catalyzes the complicated ring closure reaction between the two acyclic compounds 1-deoxy-D-xylulose-5-phosphate (DXP) and 3-amino-2-oxopropyl phosphate (1-amino-acetone-3-phosphate or AAP) to form pyridoxine 5'-phosphate (PNP) and inorganic phosphate. This chain is Pyridoxine 5'-phosphate synthase, found in Neisseria meningitidis serogroup C.